Reading from the N-terminus, the 253-residue chain is Amino-acid-binding protein AabA (253 aa).

An N-terminal signal peptide occupies residues 1-23 (MPFLKTLFRGALCSIACGASLFC).

Belongs to the bacterial solute-binding protein 3 family.

It is found in the periplasm. This chain is Amino-acid-binding protein AabA (aabA), found in Dichelobacter nodosus (Bacteroides nodosus).